The following is a 637-amino-acid chain: 1-deoxy-D-xylulose-5-phosphate synthase (637 aa).

Residues histidine 82 and 123-125 (GHA) each bind thiamine diphosphate. Residue aspartate 154 participates in Mg(2+) binding. Thiamine diphosphate-binding positions include 155 to 156 (GS), asparagine 183, tyrosine 295, and glutamate 378. Position 183 (asparagine 183) interacts with Mg(2+).

This sequence belongs to the transketolase family. DXPS subfamily. Homodimer. It depends on Mg(2+) as a cofactor. Requires thiamine diphosphate as cofactor.

It catalyses the reaction D-glyceraldehyde 3-phosphate + pyruvate + H(+) = 1-deoxy-D-xylulose 5-phosphate + CO2. Its pathway is metabolic intermediate biosynthesis; 1-deoxy-D-xylulose 5-phosphate biosynthesis; 1-deoxy-D-xylulose 5-phosphate from D-glyceraldehyde 3-phosphate and pyruvate: step 1/1. Functionally, catalyzes the acyloin condensation reaction between C atoms 2 and 3 of pyruvate and glyceraldehyde 3-phosphate to yield 1-deoxy-D-xylulose-5-phosphate (DXP). The chain is 1-deoxy-D-xylulose-5-phosphate synthase from Lawsonia intracellularis (strain PHE/MN1-00).